Reading from the N-terminus, the 445-residue chain is Zinc finger protein 296 (445 aa).

Over residues 1 to 10 the composition is skewed to basic residues; it reads MSRRKAGRVP. The segment at 1 to 20 is disordered; it reads MSRRKAGRVPRRVDPDTDTD. Residue Lys31 forms a Glycyl lysine isopeptide (Lys-Gly) (interchain with G-Cter in SUMO2) linkage. Positions 62–88 are disordered; that stretch reads SRPLGAPSTCAPRMPLSSKSSDRQPWT. 3 consecutive C2H2-type zinc fingers follow at residues 138 to 161, 212 to 234, and 240 to 262; these read LSCL…QWDH, PTCD…MRSH, and YSCD…KKTH. A disordered region spans residues 256 to 359; it reads NRHKKTHRQL…TAPRKSHGPG (104 aa). The segment covering 269-278 has biased composition (polar residues); sequence SPSTSASSRG. Residues 320-332 show a composition bias toward gly residues; the sequence is PGSGAQGGPGFVG. Over residues 338-351 the composition is skewed to basic and acidic residues; it reads KVERTDPVKIEKTA. C2H2-type zinc fingers lie at residues 360-382, 388-410, and 418-441; these read GKCE…RRSH, YTCD…RRTH, and VKCP…RQKH.

The protein belongs to the krueppel C2H2-type zinc-finger protein family. As to quaternary structure, interacts with KLF4. Strongly expressed in testis and embryonic stem cells.

It is found in the nucleus. Functionally, may be a transcriptional corepressor with KLF4. This chain is Zinc finger protein 296, found in Mus musculus (Mouse).